A 136-amino-acid polypeptide reads, in one-letter code: Class I hydrophobin A (136 aa).

The signal sequence occupies residues 1-16 (MRFALAITTLIAAVTA). 4 disulfide bridges follow: Cys-39-Cys-109, Cys-47-Cys-103, Cys-48-Cys-85, and Cys-110-Cys-128.

Belongs to the fungal hydrophobin family. Expressed in aerial conidia, in vitro blastospores, submerged conidia, and cells sporulating on chitin and insect cuticle, with hyd1 expression peaking in growing mycelia.

It is found in the secreted. Its subcellular location is the cell wall. The protein localises to the spore coat. The protein resides in the vacuole. It localises to the cytoplasmic vesicle. In terms of biological role, aerial growth, conidiation, and dispersal of filamentous fungi in the environment rely upon a capability of their secreting small amphipathic proteins called hydrophobins (HPBs) with low sequence identity. Class I can self-assemble into an outermost layer of rodlet bundles on aerial cell surfaces, conferring cellular hydrophobicity that supports fungal growth, development and dispersal; whereas Class II form highly ordered films at water-air interfaces through intermolecular interactions but contribute nothing to the rodlet structure. Hyd1A contributes to certain cell wall-related features, such as hydrophobicity but is not involved in cell wall-related events during fungal proliferation in host hemocoel. Hyd1A and hyd1B coregulate the formation, morphology and orderly assembly of rodlet bundles required for conidial hydrophobicity and infectivity. Contributes to the spore coat rodlet layer. The chain is Class I hydrophobin A from Beauveria bassiana (strain ARSEF 2860) (White muscardine disease fungus).